Here is a 379-residue protein sequence, read N- to C-terminus: UDP-N-acetylglucosamine--N-acetylmuramyl-(pentapeptide) pyrophosphoryl-undecaprenol N-acetylglucosamine transferase (379 aa).

Residues 17–19 (TGG), N128, R169, S197, and Q298 contribute to the UDP-N-acetyl-alpha-D-glucosamine site.

Belongs to the glycosyltransferase 28 family. MurG subfamily.

The protein localises to the cell inner membrane. The enzyme catalyses di-trans,octa-cis-undecaprenyl diphospho-N-acetyl-alpha-D-muramoyl-L-alanyl-D-glutamyl-meso-2,6-diaminopimeloyl-D-alanyl-D-alanine + UDP-N-acetyl-alpha-D-glucosamine = di-trans,octa-cis-undecaprenyl diphospho-[N-acetyl-alpha-D-glucosaminyl-(1-&gt;4)]-N-acetyl-alpha-D-muramoyl-L-alanyl-D-glutamyl-meso-2,6-diaminopimeloyl-D-alanyl-D-alanine + UDP + H(+). It functions in the pathway cell wall biogenesis; peptidoglycan biosynthesis. Its function is as follows. Cell wall formation. Catalyzes the transfer of a GlcNAc subunit on undecaprenyl-pyrophosphoryl-MurNAc-pentapeptide (lipid intermediate I) to form undecaprenyl-pyrophosphoryl-MurNAc-(pentapeptide)GlcNAc (lipid intermediate II). The polypeptide is UDP-N-acetylglucosamine--N-acetylmuramyl-(pentapeptide) pyrophosphoryl-undecaprenol N-acetylglucosamine transferase (Brucella melitensis biotype 2 (strain ATCC 23457)).